The sequence spans 77 residues: Neurotoxin LmNaTx21.1 (77 aa).

Residues 1 to 7 (LILVACL) form the signal peptide. One can recognise an LCN-type CS-alpha/beta domain in the interval 16–76 (KDGYPVDWNN…VEIKGYGRCR (61 aa)). 4 cysteine pairs are disulfide-bonded: C26-C75, C30-C51, C37-C58, and C41-C60.

This sequence belongs to the long (4 C-C) scorpion toxin superfamily. Sodium channel inhibitor family. Alpha subfamily. In terms of tissue distribution, expressed by the venom gland.

It is found in the secreted. Binds voltage-independently at site-3 of voltage-gated sodium channels (Nav) and inhibits the inactivation of the activated channels, thereby blocking neuronal transmission. The sequence is that of Neurotoxin LmNaTx21.1 from Lychas mucronatus (Chinese swimming scorpion).